Consider the following 198-residue polypeptide: MEHYLSLLVRSIFIENMALSFFLGMCTFLAVSKKVKTSFGLGVAVIVVLTIAIPVNNLVYNLLLKDGAIVDGVDLTFLNFITFIGVIAALVQILEMILDRFFPPLYNALGIFLPLITVNCAIFGGVSFMVQRDYNFVESIVYGFGSGVGWMLAIVALAGIREKMKYSDVPPGLRGLGITFITVGLMALGFMSFSGVQL.

6 helical membrane-spanning segments follow: residues 11-31 (SIFI…FLAV), 39-59 (FGLG…NNLV), 77-97 (FLNF…LEMI), 110-130 (GIFL…SFMV), 140-160 (IVYG…LAGI), and 176-196 (LGIT…FSGV).

It belongs to the NqrDE/RnfAE family. Composed of six subunits; NqrA, NqrB, NqrC, NqrD, NqrE and NqrF.

The protein resides in the cell inner membrane. The catalysed reaction is a ubiquinone + n Na(+)(in) + NADH + H(+) = a ubiquinol + n Na(+)(out) + NAD(+). In terms of biological role, NQR complex catalyzes the reduction of ubiquinone-1 to ubiquinol by two successive reactions, coupled with the transport of Na(+) ions from the cytoplasm to the periplasm. NqrA to NqrE are probably involved in the second step, the conversion of ubisemiquinone to ubiquinol. The polypeptide is Na(+)-translocating NADH-quinone reductase subunit E (Photobacterium profundum (strain SS9)).